The chain runs to 377 residues: Aquaporin-2 (377 aa).

The Cytoplasmic portion of the chain corresponds to 1–14 (MAANKGINGGIKNH). A helical transmembrane segment spans residues 15–35 (FIAFLGEFVGTFLFLFFAYGG). At 36-56 (TQTANQTSQKNPSIVASPDIN) the chain is on the extracellular side. N-linked (GlcNAc...) asparagine glycosylation is present at asparagine 40. A helical membrane pass occupies residues 57-77 (QLLYIALIFGFSLTVNVWIFF). The Cytoplasmic portion of the chain corresponds to 78–87 (RVSGGLFNPA). An NPA 1 motif is present at residues 85–87 (NPA). The helical transmembrane segment at 88–108 (VTIALCLVGVVGPVRSIFIFI) threads the bilayer. Over 109-144 (AQVVASIAAAAAVRGLLPGDTVLFSCALAPGTSIAQ) the chain is Extracellular. Residues 145 to 165 (GLFLEMFFTIELVFTILMLAA) form a helical membrane-spanning segment. Residues 166 to 171 (EKTKVT) lie on the Cytoplasmic side of the membrane. The helical transmembrane segment at 172–192 (FVAPVGIGLSLFVAELMGVAW) threads the bilayer. Residues 193–215 (TGGALNPARAFGAEVIGGFRGYH) are Extracellular-facing. An NPA 2 motif is present at residues 198 to 200 (NPA). A helical transmembrane segment spans residues 216 to 236 (WIYWLGPLMGAVLAAGFYKVI). Residues 237-377 (KFLNYEQVNG…ANAQNRAKTP (141 aa)) are Cytoplasmic-facing. 2 disordered regions span residues 278–332 (LFQT…RENE) and 358–377 (RLSG…AKTP). Polar residues-rich tracts occupy residues 315 to 328 (PAQQ…ASTI) and 368 to 377 (ANAQNRAKTP).

It belongs to the MIP/aquaporin (TC 1.A.8) family.

It is found in the membrane. The catalysed reaction is H2O(in) = H2O(out). It catalyses the reaction glycerol(in) = glycerol(out). Water channel required to facilitate the transport of water across membranes. Involved in conidiation. This is Aquaporin-2 from Botryotinia fuckeliana (strain B05.10) (Noble rot fungus).